The chain runs to 120 residues: ATP-dependent Clp protease adapter protein ClpS (120 aa).

Residues 1 to 20 form a disordered region; sequence MATKSPVNPKVPLVQEPDRD.

This sequence belongs to the ClpS family. Binds to the N-terminal domain of the chaperone ClpA.

Its function is as follows. Involved in the modulation of the specificity of the ClpAP-mediated ATP-dependent protein degradation. The polypeptide is ATP-dependent Clp protease adapter protein ClpS (Albidiferax ferrireducens (strain ATCC BAA-621 / DSM 15236 / T118) (Rhodoferax ferrireducens)).